We begin with the raw amino-acid sequence, 692 residues long: Protein arginine N-methyltransferase 7 (692 aa).

SAM-dependent MTase PRMT-type domains follow at residues 14-345 (SLEW…YCVW) and 358-684 (SAYQ…ITME). Arginine 32 is modified (omega-N-methylarginine). Residues glutamate 144 and glutamate 153 contribute to the active site.

Belongs to the class I-like SAM-binding methyltransferase superfamily. Protein arginine N-methyltransferase family. PRMT7 subfamily. In terms of assembly, homodimer and heterodimer. Interacts with PRMT5 and SNRPD3. Interacts with CTCFL.

It localises to the cytoplasm. The protein localises to the cytosol. It is found in the nucleus. It carries out the reaction L-arginyl-[protein] + S-adenosyl-L-methionine = N(omega)-methyl-L-arginyl-[protein] + S-adenosyl-L-homocysteine + H(+). In terms of biological role, arginine methyltransferase that can both catalyze the formation of omega-N monomethylarginine (MMA) and symmetrical dimethylarginine (sDMA), with a preference for the formation of MMA. Specifically mediates the symmetrical dimethylation of arginine residues in the small nuclear ribonucleoproteins Sm D1 (SNRPD1) and Sm D3 (SNRPD3); such methylation being required for the assembly and biogenesis of snRNP core particles. Specifically mediates the symmetric dimethylation of histone H4 'Arg-3' to form H4R3me2s. Plays a role in gene imprinting by being recruited by CTCFL at the H19 imprinted control region (ICR) and methylating histone H4 to form H4R3me2s, possibly leading to recruit DNA methyltransferases at these sites. May also play a role in embryonic stem cell (ESC) pluripotency. Also able to mediate the arginine methylation of histone H2A and myelin basic protein (MBP) in vitro; the relevance of such results is however unclear in vivo. This chain is Protein arginine N-methyltransferase 7 (Prmt7), found in Mus musculus (Mouse).